Consider the following 226-residue polypeptide: MALKDLPAQAQPREKLAARGPSALSDIELLAIVLRTGMAGKGVLQLAQELLQLPGRAGLSGLLQAGHADLKAIKGLGPSKCAQLLAVLELARRAMAEQLRERPALASPEAVARYLQLHLAARQHEVFAVLFLDGQHRLIALEEMFRGTLTRTSVYPREVVLRALHHHAGAVILAHNHPSGQVQASAADKAVTQNLQAALRLVDIQVLDHVIVAPGASLSMAGQGML.

The MPN domain maps to 104–226; that stretch reads ALASPEAVAR…SLSMAGQGML (123 aa). The Zn(2+) site is built by His-175, His-177, and Asp-188. Residues 175–188 carry the JAMM motif motif; the sequence is HNHPSGQVQASAAD.

It belongs to the UPF0758 family.

This Delftia acidovorans (strain DSM 14801 / SPH-1) protein is UPF0758 protein Daci_1904.